The following is a 625-amino-acid chain: ATP-dependent rRNA helicase spb4 (625 aa).

The short motif at 14–42 (WDALTPSLAEWILDAIKSMGFEKMTPVQA) is the Q motif element. The region spanning 45–246 (IPLFMGNKDV…RVGLRNPVKI (202 aa)) is the Helicase ATP-binding domain. 58–65 (AVTGSGKT) serves as a coordination point for ATP. The DEAD box motif lies at 194–197 (DEAD). A Helicase C-terminal domain is found at 278 to 436 (ALLSLLSQLQ…TTDDAAKILI (159 aa)). Residues 550 to 597 (KKQREAWSQKHEKQDLKELKREKKKRKREIERLDKMTDEEKRVEQEKE) form a disordered region. Composition is skewed to basic and acidic residues over residues 553-570 (REAW…ELKR) and 577-597 (REIE…QEKE). Residues 557–614 (SQKHEKQDLKELKREKKKRKREIERLDKMTDEEKRVEQEKERELQALIEQVKRRKIED) are a coiled coil.

Belongs to the DEAD box helicase family. DDX55/SPB4 subfamily. As to quaternary structure, component of pre-60S ribosomal complexes.

It is found in the nucleus. It localises to the nucleolus. The catalysed reaction is ATP + H2O = ADP + phosphate + H(+). Its function is as follows. ATP-binding RNA helicase involved in the biogenesis of 60S ribosomal subunits. Binds 90S pre-ribosomal particles and dissociates from pre-60S ribosomal particles after processing of 27SB pre-rRNA. Required for the normal formation of 18S rRNA through the processing of pre-rRNAs at sites A0, A1 and A2, and the normal formation of 25S and 5.8S rRNAs through the processing of pre-rRNAs at sites C1 and C2. This Sclerotinia sclerotiorum (strain ATCC 18683 / 1980 / Ss-1) (White mold) protein is ATP-dependent rRNA helicase spb4.